Reading from the N-terminus, the 65-residue chain is Hainantoxin-X.2 (65 aa).

A signal peptide spans 1 to 20 (MNVKILVLVAVLCLVVSTHA). Positions 21–37 (ERHSKTDMEDSPMIQER) are excised as a propeptide. Cystine bridges form between Cys-39–Cys-56, Cys-46–Cys-59, and Cys-55–Cys-64.

Belongs to the neurotoxin 36 family. 02 subfamily. As to expression, expressed by the venom gland.

It localises to the secreted. Its function is as follows. Reversibly blocks N-type calcium channels (Cav2.2/CACNA1B) in rat dorsal root ganglion cells. Elicits no toxic symptoms in either vertebrates or invertebrates during a period of 48 hours post-injection, when it was assayed in vivo by direct injection into mice and cockroaches. The chain is Hainantoxin-X.2 from Cyriopagopus hainanus (Chinese bird spider).